A 363-amino-acid polypeptide reads, in one-letter code: AA9 family lytic polysaccharide monooxygenase I (363 aa).

The first 19 residues, 1-19 (MSLFKFAAFVLGTAGSVAG), serve as a signal peptide directing secretion. Cu(2+) contacts are provided by His20 and His105. Disulfide bonds link Cys75–Cys197 and Cys116–Cys120. His183 and Gln192 together coordinate O2. Tyr194 contacts Cu(2+). Positions 248-257 (GSDSNTATSG) are enriched in polar residues. 2 disordered regions span residues 248-270 (GSDSNTATSGASPPSTNFSPTTT) and 298-363 (SVSY…RTQS). Positions 258 to 270 (ASPPSTNFSPTTT) are enriched in low complexity. Residues 298 to 307 (SVSYSQTPWP) show a composition bias toward polar residues. The span at 308–329 (SSTATEATSASSSAGGSNNGHT) shows a compositional bias: low complexity. Residues 342–354 (TGKKRSRLNRRRM) show a composition bias toward basic residues.

Belongs to the polysaccharide monooxygenase AA9 family. Requires Cu(2+) as cofactor.

It is found in the secreted. The catalysed reaction is [(1-&gt;4)-beta-D-glucosyl]n+m + reduced acceptor + O2 = 4-dehydro-beta-D-glucosyl-[(1-&gt;4)-beta-D-glucosyl]n-1 + [(1-&gt;4)-beta-D-glucosyl]m + acceptor + H2O.. Functionally, lytic polysaccharide monooxygenase (LPMO) that depolymerizes crystalline and amorphous polysaccharides via the oxidation of scissile alpha- or beta-(1-4)-glycosidic bonds, yielding C1 or C4 oxidation products. Catalysis by LPMOs requires the reduction of the active-site copper from Cu(II) to Cu(I) by a reducing agent and H(2)O(2) or O(2) as a cosubstrate. The chain is AA9 family lytic polysaccharide monooxygenase I from Emericella nidulans (strain FGSC A4 / ATCC 38163 / CBS 112.46 / NRRL 194 / M139) (Aspergillus nidulans).